The following is a 269-amino-acid chain: Bidirectional sugar transporter SWEET1a (269 aa).

The Extracellular portion of the chain corresponds to 1-6 (MEHIAR). A helical membrane pass occupies residues 7–27 (FFFGVSGNVIALFLFLSPVVT). Residues 8–96 (FFGVSGNVIA…IFLIFAVDRR (89 aa)) enclose the MtN3/slv 1 domain. The Cytoplasmic segment spans residues 28 to 42 (FWRIIRKRSTEDFSG). The helical transmembrane segment at 43-63 (VPYNMTLLNCLLSAWYGLPFV) threads the bilayer. At 64–72 (SPNNILVST) the chain is on the extracellular side. The chain crosses the membrane as a helical span at residues 73 to 93 (INGTGSVIEAIYVVIFLIFAV). The Cytoplasmic portion of the chain corresponds to 94–100 (DRRARLR). The chain crosses the membrane as a helical span at residues 101–121 (MLGLLSIVVSIFATVVLVSLL). The Extracellular portion of the chain corresponds to 122–129 (ALHGNARK). Residues 130 to 150 (VFCGLAATIFSICMYASPLSI) traverse the membrane as a helical segment. Residues 132 to 215 (CGLAATIFSI…ILYFIYRKNK (84 aa)) form the MtN3/slv 2 domain. Topologically, residues 151 to 164 (MRLVIKTKSVEYMP) are cytoplasmic. A helical transmembrane segment spans residues 165 to 185 (FLLSLAVFLCGTSWFIYGLLG). Topologically, residues 186 to 189 (RDPF) are extracellular. The helical transmembrane segment at 190–210 (IIIPNGCGSFLGLVQLILYFI) threads the bilayer. Residues 211 to 269 (YRKNKGPAVPAGKGEAAAAADVEDAKKVAAAVEMADATTTNKAAADTVVGDGKVVASQV) lie on the Cytoplasmic side of the membrane.

It belongs to the SWEET sugar transporter family. In terms of assembly, forms homooligomers and/or heterooligomers.

Its subcellular location is the cell membrane. Functionally, mediates both low-affinity uptake and efflux of sugar across the plasma membrane. This Sorghum bicolor (Sorghum) protein is Bidirectional sugar transporter SWEET1a.